Reading from the N-terminus, the 282-residue chain is ATP synthase gamma chain (282 aa).

The protein belongs to the ATPase gamma chain family. In terms of assembly, F-type ATPases have 2 components, CF(1) - the catalytic core - and CF(0) - the membrane proton channel. CF(1) has five subunits: alpha(3), beta(3), gamma(1), delta(1), epsilon(1). CF(0) has three main subunits: a, b and c.

The protein localises to the cell membrane. Its function is as follows. Produces ATP from ADP in the presence of a proton gradient across the membrane. The gamma chain is believed to be important in regulating ATPase activity and the flow of protons through the CF(0) complex. The polypeptide is ATP synthase gamma chain (Clostridium acetobutylicum (strain ATCC 824 / DSM 792 / JCM 1419 / IAM 19013 / LMG 5710 / NBRC 13948 / NRRL B-527 / VKM B-1787 / 2291 / W)).